Consider the following 783-residue polypeptide: Spindle pole body protein ppc89 (783 aa).

At serine 157 the chain carries Phosphoserine. 4 disordered regions span residues 180-216 (FDSP…ETPS), 434-458 (KESN…MNEA), 471-504 (ENKS…PTSG), and 528-610 (LSQS…MKGN). Polar residues-rich tracts occupy residues 201–216 (RSKT…ETPS), 437–453 (NVTS…SKPL), and 474–504 (SGAN…PTSG). The span at 536–551 (PVKHRKRRPKSKRRIT) shows a compositional bias: basic residues. Residues 566-590 (ESDEGSEEISLDSEYSDILSDDGDF) are compositionally biased toward acidic residues.

It is found in the cytoplasm. Its subcellular location is the cytoskeleton. The protein resides in the microtubule organizing center. The protein localises to the spindle pole body. Has a role in meiosis. The sequence is that of Spindle pole body protein ppc89 (ppc89) from Schizosaccharomyces pombe (strain 972 / ATCC 24843) (Fission yeast).